A 491-amino-acid chain; its full sequence is Glutamate--tRNA ligase (491 aa).

Positions 13–23 (PSPTGFLHIGN) match the 'HIGH' region motif. Zn(2+) is bound by residues Cys110, Cys112, Cys137, and His139. The 'KMSKS' region motif lies at 254–258 (KLSKR). Position 257 (Lys257) interacts with ATP.

It belongs to the class-I aminoacyl-tRNA synthetase family. Glutamate--tRNA ligase type 1 subfamily. As to quaternary structure, monomer. Requires Zn(2+) as cofactor.

The protein localises to the cytoplasm. The catalysed reaction is tRNA(Glu) + L-glutamate + ATP = L-glutamyl-tRNA(Glu) + AMP + diphosphate. Its function is as follows. Catalyzes the attachment of glutamate to tRNA(Glu) in a two-step reaction: glutamate is first activated by ATP to form Glu-AMP and then transferred to the acceptor end of tRNA(Glu). This chain is Glutamate--tRNA ligase, found in Listeria monocytogenes serotype 4b (strain F2365).